Here is a 280-residue protein sequence, read N- to C-terminus: Acetylglutamate kinase (280 aa).

Residues 57 to 58 (GG), Arg-79, and Asn-174 contribute to the substrate site.

This sequence belongs to the acetylglutamate kinase family. ArgB subfamily.

Its subcellular location is the cytoplasm. The catalysed reaction is N-acetyl-L-glutamate + ATP = N-acetyl-L-glutamyl 5-phosphate + ADP. Its pathway is amino-acid biosynthesis; L-arginine biosynthesis; N(2)-acetyl-L-ornithine from L-glutamate: step 2/4. Functionally, catalyzes the ATP-dependent phosphorylation of N-acetyl-L-glutamate. This chain is Acetylglutamate kinase, found in Helicobacter hepaticus (strain ATCC 51449 / 3B1).